Consider the following 524-residue polypeptide: MEPKAPQLRRRERQGEEQENGACGEGNTRTHRAPDLVQWTRHMEAVKTQCLEQAQRELAELMDRAIWEAVQAYPKQDRPLPSTASDSTRKTQELHPGKRKVFITRKSLLDELMGVQHFRTIYHMFIAGLCVLIISTLAIDFIDEGRLMLEFDLLLFSFGQLPLALMMWVPMFLSTLLLPYQTLRLWARPRSGGAWTLGASLGCVLLAAHAAVLCVLPVHVSVKHELPPASRCVLVFEQVRFLMKSYSFLRETVPGIFCVRGGKGICTPSFSSYLYFLFCPTLIYRETYPRTPSIRWNYVAKNFAQALGCLLYACFILGRLCVPVFANMSREPFSTRALLLSILHATGPGIFMLLLIFFAFLHCWLNAFAEMLRFGDRMFYRDWWNSTSFSNYYRTWNVVVHDWLYSYVYQDGLWLLGRQGRGAAMLGVFLVSALVHEYIFCFVLGFFYPVMLILFLVVGGLLNFTMNDRHTGPAWNILMWTFLFLGQGIQVSLYCQEWYARRHCPLPQPTFWELVTPRSWSCHP.

Residues 1–31 form a disordered region; sequence MEPKAPQLRRRERQGEEQENGACGEGNTRTH. Residues 1 to 118 are Cytoplasmic-facing; it reads MEPKAPQLRR…LDELMGVQHF (118 aa). Cholesterol is bound at residue histidine 117. The helical transmembrane segment at 119–140 threads the bilayer; the sequence is RTIYHMFIAGLCVLIISTLAID. At 141–160 the chain is on the lumenal side; sequence FIDEGRLMLEFDLLLFSFGQ. A helical membrane pass occupies residues 161–186; that stretch reads LPLALMMWVPMFLSTLLLPYQTLRLW. The Cytoplasmic portion of the chain corresponds to 187-198; it reads ARPRSGGAWTLG. A helical transmembrane segment spans residues 199 to 222; that stretch reads ASLGCVLLAAHAAVLCVLPVHVSV. The Lumenal segment spans residues 223–230; sequence KHELPPAS. Residues 231–254 form a helical membrane-spanning segment; it reads RCVLVFEQVRFLMKSYSFLRETVP. At 255–295 the chain is on the cytoplasmic side; the sequence is GIFCVRGGKGICTPSFSSYLYFLFCPTLIYRETYPRTPSIR. At cysteine 279 the chain carries Cysteine sulfenic acid (-SOH); alternate. Cysteine 279 is covalently cross-linked (Glycyl cysteine thioester (Cys-Gly) (interchain with G-Cter in ubiquitin); alternate). A helical membrane pass occupies residues 296–328; it reads WNYVAKNFAQALGCLLYACFILGRLCVPVFANM. Residues 329–345 are Lumenal-facing; it reads SREPFSTRALLLSILHA. Residues 346-371 traverse the membrane as a helical segment; it reads TGPGIFMLLLIFFAFLHCWLNAFAEM. Residues 372 to 419 are Cytoplasmic-facing; the sequence is LRFGDRMFYRDWWNSTSFSNYYRTWNVVVHDWLYSYVYQDGLWLLGRQ. An FYXDWWN motif motif is present at residues 379-385; it reads FYRDWWN. Residues asparagine 391, arginine 394, asparagine 397, histidine 401, tyrosine 409, and serine 432 each contribute to the an acyl-CoA site. The helical transmembrane segment at 420–444 threads the bilayer; the sequence is GRGAAMLGVFLVSALVHEYIFCFVL. Residue histidine 436 is part of the active site. Residues 445-450 lie on the Lumenal side of the membrane; the sequence is GFFYPV. The chain crosses the membrane as a helical span at residues 451–466; sequence MLILFLVVGGLLNFTM. Topologically, residues 467-472 are cytoplasmic; sequence NDRHTG. Residues 473-504 traverse the membrane as a helical segment; it reads PAWNILMWTFLFLGQGIQVSLYCQEWYARRHC. Residues 505-524 lie on the Lumenal side of the membrane; the sequence is PLPQPTFWELVTPRSWSCHP.

It belongs to the membrane-bound acyltransferase family. Sterol o-acyltransferase subfamily. In terms of assembly, may form homo- or heterodimers. Interacts with INSIG1; the interaction is direct and promotes association with AMFR/gp78. In terms of processing, polyubiquitinated by AMFR/gp78 at Cys-279, leading to its degradation when the lipid levels are low. Association with AMFR/gp78 is mediated via interaction with INSIG1. High concentration of cholesterol and fatty acid results in Cys-279 oxidation, preventing ubiquitination at the same site, resulting in protein stabilization. Oxidized at Cys-279: high concentration of cholesterol and fatty acid induce reactive oxygen species, which oxidizes Cys-279, preventing ubiquitination at the same site, and resulting in protein stabilization.

Its subcellular location is the endoplasmic reticulum membrane. It catalyses the reaction a sterol + a long-chain fatty acyl-CoA = a long-chain 3-hydroxysterol ester + CoA. The catalysed reaction is cholesterol + an acyl-CoA = a cholesterol ester + CoA. It carries out the reaction cholesterol + (9Z)-octadecenoyl-CoA = cholesteryl (9Z-octadecenoate) + CoA. The enzyme catalyses (5Z,8Z,11Z,14Z,17Z)-eicosapentaenoyl-CoA + cholesterol = (5Z,8Z,11Z,14Z,17Z-eicosapentaenoyl)-cholesterol + CoA. It catalyses the reaction (9Z,12Z,15Z)-octadecatrienoyl-CoA + cholesterol = (9Z,12Z,15Z-octadecatrienoyl)-cholesterol + CoA. The catalysed reaction is (5Z,8Z,11Z,14Z)-eicosatetraenoyl-CoA + cholesterol = cholesteryl (5Z,8Z,11Z,14Z)-eicosatetraenoate + CoA. Catalyzes the formation of fatty acid-cholesterol esters, which are less soluble in membranes than cholesterol. Plays a role in lipoprotein assembly and dietary cholesterol absorption. Utilizes oleoyl-CoA ((9Z)-octadecenoyl-CoA) and linolenoyl-CoA ((9Z,12Z,15Z)-octadecatrienoyl-CoA) as substrates. May provide cholesteryl esters for lipoprotein secretion from hepatocytes and intestinal mucosa. The sequence is that of Sterol O-acyltransferase 2 from Rattus norvegicus (Rat).